We begin with the raw amino-acid sequence, 210 residues long: Scoloptoxin SSD976 (210 aa).

The N-terminal stretch at 1–23 (MNILLSSTLFVLLMFQIIGSGMG) is a signal peptide.

In terms of processing, contains 3 disulfide bonds. As to expression, expressed by the venom gland.

Its subcellular location is the secreted. Its function is as follows. Voltage-gated calcium channel inhibitor. The sequence is that of Scoloptoxin SSD976 from Scolopendra dehaani (Thai centipede).